Consider the following 326-residue polypeptide: Biotin synthase (326 aa).

One can recognise a Radical SAM core domain in the interval 51 to 278 (NRVQVSRLIS…KSFVRLSAGR (228 aa)). 3 residues coordinate [4Fe-4S] cluster: cysteine 66, cysteine 70, and cysteine 73. [2Fe-2S] cluster contacts are provided by cysteine 110, cysteine 141, cysteine 201, and arginine 273.

It belongs to the radical SAM superfamily. Biotin synthase family. In terms of assembly, homodimer. Requires [4Fe-4S] cluster as cofactor. It depends on [2Fe-2S] cluster as a cofactor.

It carries out the reaction (4R,5S)-dethiobiotin + (sulfur carrier)-SH + 2 reduced [2Fe-2S]-[ferredoxin] + 2 S-adenosyl-L-methionine = (sulfur carrier)-H + biotin + 2 5'-deoxyadenosine + 2 L-methionine + 2 oxidized [2Fe-2S]-[ferredoxin]. The protein operates within cofactor biosynthesis; biotin biosynthesis; biotin from 7,8-diaminononanoate: step 2/2. Its function is as follows. Catalyzes the conversion of dethiobiotin (DTB) to biotin by the insertion of a sulfur atom into dethiobiotin via a radical-based mechanism. This chain is Biotin synthase, found in Paramagnetospirillum magneticum (strain ATCC 700264 / AMB-1) (Magnetospirillum magneticum).